Consider the following 355-residue polypeptide: Syntaxin-5 (355 aa).

The Cytoplasmic segment spans residues Met1–Arg333. A compositionally biased stretch (polar residues) spans Pro28–Asp37. Residues Pro28–Pro51 form a disordered region. Over residues Pro40 to Pro51 the composition is skewed to pro residues. The IxM motif; signal for cargo packaging into COPII-coated vesicles motif lies at Ile245 to Met247. The t-SNARE coiled-coil homology domain occupies Asp263 to Tyr325. Positions Phe287–Ala318 form a coiled coil. A helical; Anchor for type IV membrane protein membrane pass occupies residues Trp334–Leu354. Residue Ala355 is a topological domain, vesicular.

The protein belongs to the syntaxin family. As to quaternary structure, part of a ternary complex containing STX5A, NSFL1C and VCP. Identified in a unique SNARE complex composed of the Golgi SNAREs GOSR1, GOSR2, YKT6 and VTI1A. Component of a SNARE complex consisting of STX5, YKT6, GOSR1 and BET1L. Interacts with BET1L. Interacts with BET1. Interacts with COG4. Interacts with GM130/GOLGA2. Interacts (via IxM motif) with SEC24C and SEC24D; mediates STX5 packaging into COPII-coated vesicles. Interacts with VLDLR; this interaction mediates VLDLR translocation from the endoplasmic reticulum to the plasma membrane.

The protein localises to the endoplasmic reticulum-Golgi intermediate compartment membrane. It localises to the golgi apparatus membrane. Mediates endoplasmic reticulum to Golgi transport. Together with p115/USO1 and GM130/GOLGA2, involved in vesicle tethering and fusion at the cis-Golgi membrane to maintain the stacked and inter-connected structure of the Golgi apparatus. Functionally, required for Golgi to endoplasmic reticulum retrogade transport, and for intra-Golgi transport. In terms of biological role, (Microbial infection) Required for the efficient production of infectious virion during human cytomegalovirus infection. Mechanistically, participates in the formation of the cytoplasmic viral assembly compartment where tegument acquisition and envelopment occur. The sequence is that of Syntaxin-5 (STX5) from Homo sapiens (Human).